A 338-amino-acid polypeptide reads, in one-letter code: Heat-inducible transcription repressor HrcA (338 aa).

It belongs to the HrcA family.

Negative regulator of class I heat shock genes (grpE-dnaK-dnaJ and groELS operons). Prevents heat-shock induction of these operons. The chain is Heat-inducible transcription repressor HrcA from Thermotoga sp. (strain RQ2).